Reading from the N-terminus, the 262-residue chain is MVLIRVLANLLILQLSYAQKSSEPIIGGDECNRNEHRFLALVSSDGNQCGGTLINEEWVLTAAHCEGNKMKIHLGVHSKKVPNKDKQTRVAKEKFFCVSSKNYTFWDKDIMLIRLDRPVSNSEHIAPLSLPSSPPSVGSVCRIMGWGTISPTKVILPDVPHCVNINLLNYSVCRAAYPEYGLPATSRTLCAGILEGGKDTCVGDSGGPLICNGQFQGIASWGSPNCGYVREPALYTKVFDHLDWIQSIIAGNTDATCPFVNF.

The signal sequence occupies residues M1–A18. Positions Q19 to P24 are excised as a propeptide. The region spanning I25–A250 is the Peptidase S1 domain. Cystine bridges form between C31-C162, C49-C65, C97-C257, C141-C211, C173-C190, and C201-C226. Catalysis depends on H64, which acts as the Charge relay system. Residue N102 is glycosylated (N-linked (GlcNAc...) asparagine). The Charge relay system role is filled by D109. N-linked (GlcNAc...) asparagine glycosylation occurs at N169. The Charge relay system role is filled by S205.

This sequence belongs to the peptidase S1 family. Snake venom subfamily. Monomer. As to expression, expressed by the venom gland.

It is found in the secreted. Its function is as follows. Snake venom serine protease that may act in the hemostasis system of the prey. This is Snake venom serine protease catroxase-1 from Crotalus atrox (Western diamondback rattlesnake).